Consider the following 214-residue polypeptide: uncharacterized protein (214 aa).

This is an uncharacterized protein from Methanocaldococcus jannaschii (strain ATCC 43067 / DSM 2661 / JAL-1 / JCM 10045 / NBRC 100440) (Methanococcus jannaschii).